The primary structure comprises 106 residues: Nucleoid-associated protein RPA0616 (106 aa).

This sequence belongs to the YbaB/EbfC family. Homodimer.

The protein localises to the cytoplasm. It localises to the nucleoid. Binds to DNA and alters its conformation. May be involved in regulation of gene expression, nucleoid organization and DNA protection. The polypeptide is Nucleoid-associated protein RPA0616 (Rhodopseudomonas palustris (strain ATCC BAA-98 / CGA009)).